The primary structure comprises 255 residues: tRNA (guanine-N(1)-)-methyltransferase (255 aa).

S-adenosyl-L-methionine-binding positions include glycine 113 and 133-138 (VGDFVL).

The protein belongs to the RNA methyltransferase TrmD family. As to quaternary structure, homodimer.

Its subcellular location is the cytoplasm. The catalysed reaction is guanosine(37) in tRNA + S-adenosyl-L-methionine = N(1)-methylguanosine(37) in tRNA + S-adenosyl-L-homocysteine + H(+). Specifically methylates guanosine-37 in various tRNAs. This is tRNA (guanine-N(1)-)-methyltransferase from Francisella philomiragia subsp. philomiragia (strain ATCC 25017 / CCUG 19701 / FSC 153 / O#319-036).